A 1166-amino-acid polypeptide reads, in one-letter code: Poly [ADP-ribose] polymerase tankyrase-2 (1166 aa).

ANK repeat units follow at residues 23 to 52 (PSAR…VNSR), 57 to 86 (RKST…NVQA), 90 to 119 (GGLI…DPNA), and 123 to 152 (WNYT…EPTI). Position 203 is a (3S)-3-hydroxyasparagine; by HIF1AN (asparagine 203). 7 ANK repeats span residues 210–239 (RKST…DVHA), 243–272 (GDLV…CVNA), 276–305 (WQFT…DPTL), 363–395 (THET…NTNE), 399–428 (EFLT…KVNA), 432–461 (LGQT…DPNI), and 463–489 (SLQG…SLGH). A (3S)-3-hydroxyhistidine; by HIF1AN modification is found at histidine 238. A (3S)-3-hydroxyasparagine; by HIF1AN modification is found at asparagine 271. Asparagine 427 bears the (3S)-3-hydroxyasparagine; by HIF1AN mark. A (3S)-3-hydroxyasparagine; by HIF1AN modification is found at asparagine 518. ANK repeat units lie at residues 525-554 (RQST…DVHA), 558-587 (GGLV…VVNV), 591-620 (WKFT…DPTK), and 624-652 (DGNT…LLDA). The interval 545–553 (LLQHGADVH) is HIF1AN-binding. Histidine 553 is modified ((3S)-3-hydroxyhistidine; by HIF1AN). Asparagine 586 carries the post-translational modification (3S)-3-hydroxyasparagine; by HIF1AN. A (3S)-3-hydroxyasparagine; by HIF1AN mark is found at asparagine 671, asparagine 706, and asparagine 739. ANK repeat units lie at residues 678-707 (RHST…DVNA), 711-740 (GGLI…CVNA), and 744-773 (WAFT…DPTL). Residues 873 to 936 (GIDFSITQFI…IKGVERLISG (64 aa)) form the SAM domain. Residues 959–1164 (SPDDKEFQSV…YQIVRPEGMV (206 aa)) enclose the PARP catalytic domain. Positions 1081, 1084, 1089, and 1092 each coordinate Zn(2+).

This sequence belongs to the ARTD/PARP family. In terms of assembly, oligomerizes and associates with TNKS. Interacts with the cytoplasmic domain of LNPEP/Otase in SLC2A4/GLUT4-vesicles. Binds to the N-terminus of Grb14 and TRF1 with its ankyrin repeat region. Interacts with HIF1AN. Interacts with RNF146; this interaction leads to ubiquitination and proteasomal degradation. Interacts with NUMA1. Ubiquitinated by RNF146 when auto-poly-ADP-ribosylated, leading to its degradation. Deubiquitinated by USP25; leading to stabilization. Post-translationally, ADP-ribosylated (-auto). Poly-ADP-ribosylated protein is recognized by RNF146, followed by ubiquitination.

The protein resides in the cytoplasm. Its subcellular location is the golgi apparatus membrane. It localises to the nucleus. The protein localises to the chromosome. It is found in the telomere. The catalysed reaction is NAD(+) + (ADP-D-ribosyl)n-acceptor = nicotinamide + (ADP-D-ribosyl)n+1-acceptor + H(+).. The enzyme catalyses L-aspartyl-[protein] + NAD(+) = 4-O-(ADP-D-ribosyl)-L-aspartyl-[protein] + nicotinamide. It catalyses the reaction L-glutamyl-[protein] + NAD(+) = 5-O-(ADP-D-ribosyl)-L-glutamyl-[protein] + nicotinamide. In terms of biological role, poly-ADP-ribosyltransferase involved in various processes such as Wnt signaling pathway, telomere length and vesicle trafficking. Acts as an activator of the Wnt signaling pathway by mediating poly-ADP-ribosylation of AXIN1 and AXIN2, 2 key components of the beta-catenin destruction complex: poly-ADP-ribosylated target proteins are recognized by RNF146, which mediates their ubiquitination and subsequent degradation. Also mediates poly-ADP-ribosylation of BLZF1 and CASC3, followed by recruitment of RNF146 and subsequent ubiquitination. Mediates poly-ADP-ribosylation of TERF1, thereby contributing to the regulation of telomere length. Stimulates 26S proteasome activity. In Mus musculus (Mouse), this protein is Poly [ADP-ribose] polymerase tankyrase-2.